The chain runs to 302 residues: MASSWFFIVFLVLTVASVRCTTVDHMPSTDEDARDYSKLKTKTEEATDEHHSRTQQAKDELKSKADHAANEVKSNTQQAKDRASEVGKEAKEYTESWTEWAKEKISEGLGFKQDDDPKGSVEKAFDSVADTATKTKDKLQDMASGAGEYSAGKAKDMKDTAYKKTDDVKNAAKGKSSEMRQATTEKARELADSAKENANTAYIAAKEKVRDMADRTSEMTNEAQERGARKAEEAKEVVAEKAEGAAEETKKKNEERGESLKWAKEKAKQGYDAAKSKAEETIESAKDTIASGYESRSRNHKN.

Disordered regions lie at residues 25 to 93 (HMPS…AKEY), 168 to 193 (VKNA…LADS), and 205 to 302 (AKEK…NHKN). 2 stretches are compositionally biased toward basic and acidic residues: residues 34–70 (RDYS…HAAN) and 79–93 (AKDR…AKEY). Residues 205-286 (AKEKVRDMAD…KAEETIESAK (82 aa)) are compositionally biased toward basic and acidic residues.

It belongs to the LEA type 1 family.

LEA protein are late embryonic proteins abundant in higher plant seed embryos. There are two subsets of LEA proteins (5a and 5b), the first ones are expressed when the cotyledon weight reach 80 mg and the second set are expressed above 100 mg. The function of those proteins is not known. The polypeptide is Late embryogenesis abundant protein D-29 (Gossypium hirsutum (Upland cotton)).